The sequence spans 450 residues: Chromosomal replication initiator protein DnaA 2 (450 aa).

The interval 1–87 (MLTCNECTTW…LEFVVAEHKK (87 aa)) is domain I, interacts with DnaA modulators. The tract at residues 87-114 (KPSAPVASQKESNEGISEVFEETKDFEL) is domain II. The segment at 115 to 330 (KLNLSYRFDN…GAINKLTAYC (216 aa)) is domain III, AAA+ region. Residues G159, G161, K162, and T163 each coordinate ATP. Positions 331 to 450 (RLFGKSLTET…VNLCKNHIVG (120 aa)) are domain IV, binds dsDNA.

Belongs to the DnaA family. Oligomerizes as a right-handed, spiral filament on DNA at oriC.

Its subcellular location is the cytoplasm. Functionally, plays an essential role in the initiation and regulation of chromosomal replication. ATP-DnaA binds to the origin of replication (oriC) to initiate formation of the DNA replication initiation complex once per cell cycle. Binds the DnaA box (a 9 base pair repeat at the origin) and separates the double-stranded (ds)DNA. Forms a right-handed helical filament on oriC DNA; dsDNA binds to the exterior of the filament while single-stranded (ss)DNA is stabiized in the filament's interior. The ATP-DnaA-oriC complex binds and stabilizes one strand of the AT-rich DNA unwinding element (DUE), permitting loading of DNA polymerase. After initiation quickly degrades to an ADP-DnaA complex that is not apt for DNA replication. Binds acidic phospholipids. The sequence is that of Chromosomal replication initiator protein DnaA 2 from Chlamydia pneumoniae (Chlamydophila pneumoniae).